Reading from the N-terminus, the 218-residue chain is Outer-membrane lipoprotein LolB (218 aa).

A signal peptide spans methionine 1–glycine 20. Residue cysteine 21 is the site of N-palmitoyl cysteine attachment. Cysteine 21 is lipidated: S-diacylglycerol cysteine.

Belongs to the LolB family. In terms of assembly, monomer.

The protein resides in the cell outer membrane. Its function is as follows. Plays a critical role in the incorporation of lipoproteins in the outer membrane after they are released by the LolA protein. In Xanthomonas campestris pv. campestris (strain 8004), this protein is Outer-membrane lipoprotein LolB.